The primary structure comprises 196 residues: Small ribosomal subunit protein uS4c (196 aa).

Residues 17–38 (ALPGLTRKTPKSRSNLKKKFHS) are disordered. Over residues 24–38 (KTPKSRSNLKKKFHS) the composition is skewed to basic residues. In terms of domain architecture, S4 RNA-binding spans 89–169 (MRLDNILFRL…LPKHLTIDTL (81 aa)).

It belongs to the universal ribosomal protein uS4 family. In terms of assembly, part of the 30S ribosomal subunit. Contacts protein S5. The interaction surface between S4 and S5 is involved in control of translational fidelity.

Its subcellular location is the plastid. The protein localises to the chloroplast. In terms of biological role, one of the primary rRNA binding proteins, it binds directly to 16S rRNA where it nucleates assembly of the body of the 30S subunit. Its function is as follows. With S5 and S12 plays an important role in translational accuracy. The polypeptide is Small ribosomal subunit protein uS4c (rps4) (Lygeum spartum).